A 931-amino-acid chain; its full sequence is Scaffold attachment factor B1 (931 aa).

Residues 1-24 (MAETLSGLGDSGAASAAAVSSAAS) are compositionally biased toward low complexity. Residues 1-35 (MAETLSGLGDSGAASAAAVSSAASETGTRRLSDLR) are disordered. Position 2 is an N-acetylalanine (Ala-2). Ser-24 and Ser-55 each carry phosphoserine. Residues 31 to 65 (LSDLRVIDLRAELRKRNLTSSGNKSVLMERLKKAI) enclose the SAP domain. Residues 64–121 (AIEEEGGNPDEIEVISEGNKKMPKRPSKGKKPEDEGVEDNGLEENSGDGQEDVETSLE) form a disordered region. Acidic residues predominate over residues 67–77 (EEGGNPDEIEV). The residue at position 79 (Ser-79) is a Phosphoserine. Residues 98–118 (EGVEDNGLEENSGDGQEDVET) are compositionally biased toward acidic residues. Residues Lys-171 and Lys-185 each participate in a glycyl lysine isopeptide (Lys-Gly) (interchain with G-Cter in SUMO2) cross-link. Ser-194, Ser-196, and Ser-208 each carry phosphoserine. Disordered stretches follow at residues 205–304 (EEAS…TRCQ) and 316–430 (KREP…GRNF). Residues 224–233 (CKSEPVKEEG) show a composition bias toward basic and acidic residues. Lys-230 is covalently cross-linked (Glycyl lysine isopeptide (Lys-Gly) (interchain with G-Cter in SUMO)). A compositionally biased stretch (acidic residues) spans 267 to 287 (EEEEEEEEEEEQEEEQEEEGD). Lys-316 participates in a covalent cross-link: Glycyl lysine isopeptide (Lys-Gly) (interchain with G-Cter in SUMO). Polar residues predominate over residues 341 to 356 (EQSSTAAQLPETTSQE). A compositionally biased stretch (basic and acidic residues) spans 368–380 (EPRDSKDDVKKFA). A Glycyl lysine isopeptide (Lys-Gly) (interchain with G-Cter in SUMO2) cross-link involves residue Lys-403. 2 positions are modified to phosphoserine: Ser-405 and Ser-406. Residues 412 to 423 (DTKRLSREEKGR) show a composition bias toward basic and acidic residues. A Glycyl lysine isopeptide (Lys-Gly) (interchain with G-Cter in SUMO2) cross-link involves residue Lys-414. Residues 428–506 (RNFWVSGLSS…KMISVEKAKS (79 aa)) enclose the RRM domain. Ser-437 carries the phosphoserine modification. Basic and acidic residues-rich tracts occupy residues 500–573 (SVEK…ERSR) and 581–592 (GTERTVVMDKSK). Disordered stretches follow at residues 500 to 663 (SVEK…WERE), 691 to 720 (RLERERMHVEQERRREQERIHREREELRRQ), 759 to 843 (RYHS…PRRD), and 872 to 931 (RWQG…QQTQ). Residues Lys-505, Lys-536, Lys-565, and Lys-592 each participate in a glycyl lysine isopeptide (Lys-Gly) (interchain with G-Cter in SUMO2) cross-link. The tract at residues 550-816 (TDDGSTEKSK…RHGGPERHGR (267 aa)) is interaction with POLR2A; SFRS1; SFRS9 and SFRS10. Lys-600 is covalently cross-linked (Glycyl lysine isopeptide (Lys-Gly) (interchain with G-Cter in SUMO1); alternate). A Glycyl lysine isopeptide (Lys-Gly) (interchain with G-Cter in SUMO2); alternate cross-link involves residue Lys-600. Phosphoserine is present on residues Ser-602, Ser-604, Ser-623, and Ser-626. The span at 603–663 (GSKERASKSQ…QRLQAQWERE (61 aa)) shows a compositional bias: basic and acidic residues. The short motif at 621–638 (KRSVVSFDKVKESRKSRD) is the Nuclear localization signal element. An N6-acetyllysine modification is found at Lys-629. Basic and acidic residues predominate over residues 759 to 820 (RYHSDFSRQD…PERHGRDSRD (62 aa)). The residue at position 834 (Arg-834) is an Omega-N-methylarginine. 4 positions are modified to asymmetric dimethylarginine: Arg-892, Arg-898, Arg-908, and Arg-914.

As to quaternary structure, monomer and homodimer. Interacts with KHDRBS3. Interacts with CLK2. Interacts with POLR2A, ASF/SRSF1, SRp30c/SRFS9 and TRA2B/SFRS10. Interacts with SRPK1 and inhibits its activity. Interacts with RBMX. Interacts with FUS. Interacts with ZBED4. Post-translationally, phosphorylated by CDC-like kinase 2 (CLK2). In terms of processing, sumoylated by PIAS1 with SUMO1 and SUMO2/3, desumoylated by SENP1. Sumoylation is required for transcriptional repressor activity.

It localises to the nucleus. Its function is as follows. Binds to scaffold/matrix attachment region (S/MAR) DNA and forms a molecular assembly point to allow the formation of a 'transcriptosomal' complex (consisting of SR proteins and RNA polymerase II) coupling transcription and RNA processing. Functions as an estrogen receptor corepressor and can also bind to the HSP27 promoter and decrease its transcription. Thereby acts as a negative regulator of cell proliferation. When associated with RBMX, binds to and stimulates transcription from the SREBF1 promoter. This chain is Scaffold attachment factor B1 (Safb), found in Rattus norvegicus (Rat).